The primary structure comprises 208 residues: Adenylyl-sulfate kinase 3 (208 aa).

An ATP-binding site is contributed by Gly37–Thr45. Substrate-binding positions include Asp67, Arg70, Arg84, Asn87, Ile110–Ser111, and Gly160. Ser111 acts as the Phosphoserine intermediate in catalysis.

Belongs to the APS kinase family. In terms of tissue distribution, expressed in root vasculature, root tips, leaf epidermal and guard cells, pollen grains and radicle of immature seeds.

The protein localises to the cytoplasm. Its subcellular location is the cytosol. It catalyses the reaction adenosine 5'-phosphosulfate + ATP = 3'-phosphoadenylyl sulfate + ADP + H(+). It functions in the pathway sulfur metabolism; hydrogen sulfide biosynthesis; sulfite from sulfate: step 2/3. Its function is as follows. Catalyzes the synthesis of activated sulfate for the sulfation of secondary metabolites, including the glucosinolates. Essential for plant reproduction and viability. The chain is Adenylyl-sulfate kinase 3 from Arabidopsis thaliana (Mouse-ear cress).